The following is a 288-amino-acid chain: Release factor glutamine methyltransferase (288 aa).

S-adenosyl-L-methionine is bound by residues Asp-142 and Asn-186. A substrate-binding site is contributed by 186–189 (NPPY).

Belongs to the protein N5-glutamine methyltransferase family. PrmC subfamily.

The catalysed reaction is L-glutaminyl-[peptide chain release factor] + S-adenosyl-L-methionine = N(5)-methyl-L-glutaminyl-[peptide chain release factor] + S-adenosyl-L-homocysteine + H(+). Functionally, methylates the class 1 translation termination release factors RF1/PrfA and RF2/PrfB on the glutamine residue of the universally conserved GGQ motif. The protein is Release factor glutamine methyltransferase of Mycobacterium leprae (strain TN).